The chain runs to 883 residues: Alanine--tRNA ligase (883 aa).

Zn(2+)-binding residues include histidine 564, histidine 568, cysteine 666, and histidine 670.

It belongs to the class-II aminoacyl-tRNA synthetase family. It depends on Zn(2+) as a cofactor.

It is found in the cytoplasm. The catalysed reaction is tRNA(Ala) + L-alanine + ATP = L-alanyl-tRNA(Ala) + AMP + diphosphate. Its function is as follows. Catalyzes the attachment of alanine to tRNA(Ala) in a two-step reaction: alanine is first activated by ATP to form Ala-AMP and then transferred to the acceptor end of tRNA(Ala). Also edits incorrectly charged Ser-tRNA(Ala) and Gly-tRNA(Ala) via its editing domain. This is Alanine--tRNA ligase from Synechococcus sp. (strain JA-3-3Ab) (Cyanobacteria bacterium Yellowstone A-Prime).